A 456-amino-acid chain; its full sequence is UDP-N-acetylmuramoylalanine--D-glutamate ligase (456 aa).

122 to 128 (GSNGKST) provides a ligand contact to ATP.

Belongs to the MurCDEF family.

The protein localises to the cytoplasm. It carries out the reaction UDP-N-acetyl-alpha-D-muramoyl-L-alanine + D-glutamate + ATP = UDP-N-acetyl-alpha-D-muramoyl-L-alanyl-D-glutamate + ADP + phosphate + H(+). It functions in the pathway cell wall biogenesis; peptidoglycan biosynthesis. Functionally, cell wall formation. Catalyzes the addition of glutamate to the nucleotide precursor UDP-N-acetylmuramoyl-L-alanine (UMA). The sequence is that of UDP-N-acetylmuramoylalanine--D-glutamate ligase from Saccharophagus degradans (strain 2-40 / ATCC 43961 / DSM 17024).